The primary structure comprises 930 residues: Inter-alpha-trypsin inhibitor heavy chain H4 (930 aa).

The N-terminal stretch at 1–28 (MKPPRPVRTCSKVLVLLSLLAIHQTTTA) is a signal peptide. The 120-residue stretch at 29-148 (EKNGIDIYSL…KITFELVYEE (120 aa)) folds into the VIT domain. 2 N-linked (GlcNAc...) asparagine glycosylation sites follow: N81 and N207. The region spanning 272–432 (PKNVVFVIDK…YAFLEKLALD (161 aa)) is the VWFA domain. An N-linked (GlcNAc...) asparagine; atypical glycan is attached at N274. N-linked (GlcNAc...) asparagine glycosylation is found at N517 and N577. A disordered region spans residues 595 to 618 (KPDDQEQSQVAEKPMEGESRNRNV). The tract at residues 658–688 (MNFRPGVLSSRQLGLPGPPDVPDHAAYHPFR) is proline-rich (PRR) potential bioactive peptide. Positions 662–688 (PGVLSSRQLGLPGPPDVPDHAAYHPFR) are cleaved as a propeptide — potentially active peptide. T719, T720, and T722 each carry an O-linked (GalNAc...) threonine glycan. Residues 719-725 (TTMTTQT) form an O-glycosylated at three sites region. C747 and C925 are disulfide-bonded.

This sequence belongs to the ITIH family. In terms of assembly, interacts (via C-terminus) with DNAJC1 (via SANT 2 domain); this interaction protects ITIH4 against cleavage by kallikrein in vitro. In terms of processing, cleaved by plasma kallikrein to yield 100 kDa and 35 kDa fragments, and the resulting 100 kDa fragment is further converted to a 70 kDa fragment. N- and O-glycosylated. In urine, O-linked glycosylation on threonine residues in the region from Thr-719 to Thr-725 consists of core 1 or possibly core 8 glycans. Mainly Hex(HexNAc)(2), but also some Hex(3)(HexNAc)(3). N-glycosylated but not O-glycosylated in plasma. As to expression, liver specific.

The protein resides in the secreted. Its function is as follows. Type II acute-phase protein (APP) involved in inflammatory responses to trauma. May also play a role in liver development or regeneration. The protein is Inter-alpha-trypsin inhibitor heavy chain H4 (ITIH4) of Homo sapiens (Human).